The following is a 160-amino-acid chain: Transcription elongation factor GreA (160 aa).

Positions 3–84 form a coiled coil; it reads SIVNDKILLT…SKAKIIKADL (82 aa).

It belongs to the GreA/GreB family.

Functionally, necessary for efficient RNA polymerase transcription elongation past template-encoded arresting sites. The arresting sites in DNA have the property of trapping a certain fraction of elongating RNA polymerases that pass through, resulting in locked ternary complexes. Cleavage of the nascent transcript by cleavage factors such as GreA or GreB allows the resumption of elongation from the new 3'terminus. GreA releases sequences of 2 to 3 nucleotides. The chain is Transcription elongation factor GreA from Mesomycoplasma hyopneumoniae (strain 7448) (Mycoplasma hyopneumoniae).